Here is a 289-residue protein sequence, read N- to C-terminus: MPSLRDIRTRIGSVRSTRQITKAMKMVSAAKLRRAQDAVLKTRPYAMLLDQTLSRLAARAAAEEQVAHPLLAPRAQRTAEVVVVTSDRGLAGGFNSNICRFVQRFLTENADRFERIALATVGKKGREYFKARNLPIRRDYTGIHANLAYEKAEALAREATERYLAGEVDAVFLAYNEFKSAISQKQAVVQLLPVDTSAASADTAGVDFRYEPSREALLADLLPRHVAMQVWRALLESAASEHGARMSAMESATKNAEEMIASLSLQYNRARQAYVTKELSEIVSGAEAL.

The protein belongs to the ATPase gamma chain family. As to quaternary structure, F-type ATPases have 2 components, CF(1) - the catalytic core - and CF(0) - the membrane proton channel. CF(1) has five subunits: alpha(3), beta(3), gamma(1), delta(1), epsilon(1). CF(0) has three main subunits: a, b and c.

The protein resides in the cell inner membrane. Functionally, produces ATP from ADP in the presence of a proton gradient across the membrane. The gamma chain is believed to be important in regulating ATPase activity and the flow of protons through the CF(0) complex. This Anaeromyxobacter dehalogenans (strain 2CP-C) protein is ATP synthase gamma chain.